A 358-amino-acid chain; its full sequence is Presenilin hop-1 (358 aa).

The Cytoplasmic segment spans residues 1–12; that stretch reads MPRTKRVYSGKT. A helical membrane pass occupies residues 13 to 33; it reads ITGVLYPVAICMLFVAINVKL. The Lumenal segment spans residues 34-57; the sequence is SQPEQQEQSKVVYGLFHSYDTADS. A helical transmembrane segment spans residues 58 to 78; sequence GTITLYLIGFLILTTSLGVFC. The Cytoplasmic portion of the chain corresponds to 79-86; it reads YQMKFYKA. The helical transmembrane segment at 87–107 threads the bilayer; the sequence is IKVYVLANSIGILLVYSVFHF. Residues 108–115 lie on the Lumenal side of the membrane; the sequence is QRIAEAQS. A helical membrane pass occupies residues 116 to 136; sequence IPVSVPTFFFLILQFGGLGIT. Residues 137 to 148 are Cytoplasmic-facing; it reads CLHWKSHRRLHQ. Residues 149 to 169 traverse the membrane as a helical segment; that stretch reads FYLIMLAGLTAIFILNILPDW. A topological domain (lumenal) is located at residue T170. A helical membrane pass occupies residues 171–191; the sequence is VWMALTAISFWDIVAVLTPCG. D182 is an active-site residue. At 192-273 the chain is on the cytoplasmic side; that stretch reads PLKMLVETAN…EVREVEGTIR (82 aa). The span at 221 to 240 shows a compositional bias: polar residues; the sequence is EVDSPDTTRSNSTPLTEFNN. The tract at residues 221-242 is disordered; that stretch reads EVDSPDTTRSNSTPLTEFNNSS. The chain crosses the membrane as a helical span at residues 274 to 294; that stretch reads LGMGDFVFYSLMLGNTVQTCP. D278 is an active-site residue. Residues 295–297 lie on the Lumenal side of the membrane; the sequence is LPT. A helical transmembrane segment spans residues 298 to 318; it reads VVACFVSNLVGLTITLPIVTL. The Cytoplasmic segment spans residues 319 to 321; that stretch reads SQT. Residues 322 to 342 constitute an intramembrane region (helical); sequence ALPALPFPLAIAAIFYFSSHI. The PAL signature appears at 324-326; the sequence is PAL. The Cytoplasmic segment spans residues 343 to 358; that stretch reads ALTPFTDLCTSQLILI.

It belongs to the peptidase A22A family. Homodimer. Component of the gamma-secretase complex, a complex probably composed of the presenilin homodimer (sel-12, hop-1 or spe-4), nicastrin (aph-2), aph-1 and pen-2. As to expression, weakly expressed.

The protein resides in the endoplasmic reticulum membrane. It is found in the golgi apparatus membrane. Its function is as follows. Probable catalytic subunit of the gamma-secretase complex, an endoprotease complex that catalyzes the intramembrane cleavage of integral membrane proteins such as Notch receptors (lin-12 or glp-1). Probably works redundantly of lin-12, which provides more presenilin function. This chain is Presenilin hop-1 (hop-1), found in Caenorhabditis elegans.